We begin with the raw amino-acid sequence, 127 residues long: Pleckstrin homology-like domain family A member 3 (127 aa).

Residues 5 to 108 (KVMNDGYLEK…RFKNRVAVQT (104 aa)) form the PH domain.

Belongs to the PHLDA3 family.

Its subcellular location is the cytoplasm. The protein localises to the membrane. Its function is as follows. p53/tp53-regulated repressor of Akt/akt1 signaling. Represses akt1 by preventing akt1-binding to membrane lipids, thereby inhibiting akt1 translocation to the cellular membrane and activation. Contributes to p53/tp53-dependent apoptosis by repressing akt1 activity. Its direct transcription regulation by p53/tp53 may explain how p53/tp53 can negatively regulate akt1. May act as a tumor suppressor. The protein is Pleckstrin homology-like domain family A member 3 (phlda3) of Danio rerio (Zebrafish).